A 406-amino-acid chain; its full sequence is Cysteine desulfurase IscS (406 aa).

Pyridoxal 5'-phosphate contacts are provided by residues 75 to 76 (AT), asparagine 155, glutamine 183, and 203 to 205 (SSH). An N6-(pyridoxal phosphate)lysine modification is found at lysine 206. Pyridoxal 5'-phosphate is bound at residue threonine 243. The Cysteine persulfide intermediate role is filled by cysteine 330. Residue cysteine 330 coordinates [2Fe-2S] cluster.

This sequence belongs to the class-V pyridoxal-phosphate-dependent aminotransferase family. NifS/IscS subfamily. Homodimer. Forms a heterotetramer with IscU, interacts with other sulfur acceptors. It depends on pyridoxal 5'-phosphate as a cofactor.

It localises to the cytoplasm. The catalysed reaction is (sulfur carrier)-H + L-cysteine = (sulfur carrier)-SH + L-alanine. The protein operates within cofactor biosynthesis; iron-sulfur cluster biosynthesis. Master enzyme that delivers sulfur to a number of partners involved in Fe-S cluster assembly, tRNA modification or cofactor biosynthesis. Catalyzes the removal of elemental sulfur atoms from cysteine to produce alanine. Functions as a sulfur delivery protein for Fe-S cluster synthesis onto IscU, an Fe-S scaffold assembly protein, as well as other S acceptor proteins. The sequence is that of Cysteine desulfurase IscS from Haemophilus ducreyi (strain 35000HP / ATCC 700724).